Reading from the N-terminus, the 451-residue chain is uncharacterized protein (451 aa).

The TRAM domain maps to 2 to 60 (VVKVKQKIPLKIKRMGINGEGIGFYQKTLVFVPGALKGEDIFCQITAVKRNFAEAKLLT). Residues Cys73, Cys79, Cys82, and Cys162 each coordinate [4Fe-4S] cluster. Residues Gln283, Tyr312, Asp333, and Asp381 each contribute to the S-adenosyl-L-methionine site. Residue Cys408 is the Nucleophile of the active site.

It belongs to the class I-like SAM-binding methyltransferase superfamily. RNA M5U methyltransferase family.

This is an uncharacterized protein from Streptococcus pyogenes serotype M1.